The following is a 134-amino-acid chain: Large ribosomal subunit protein uL16c (134 aa).

The tract at residues 1-22 is disordered; sequence MLSPKRTRFRKQHRGRMKGISH.

The protein belongs to the universal ribosomal protein uL16 family. In terms of assembly, part of the 50S ribosomal subunit.

It is found in the plastid. It localises to the chloroplast. This chain is Large ribosomal subunit protein uL16c, found in Nicotiana tabacum (Common tobacco).